We begin with the raw amino-acid sequence, 208 residues long: FMN-dependent NADH:quinone oxidoreductase 1 (208 aa).

The protein belongs to the azoreductase type 1 family. Homodimer. FMN serves as cofactor.

The catalysed reaction is 2 a quinone + NADH + H(+) = 2 a 1,4-benzosemiquinone + NAD(+). It catalyses the reaction N,N-dimethyl-1,4-phenylenediamine + anthranilate + 2 NAD(+) = 2-(4-dimethylaminophenyl)diazenylbenzoate + 2 NADH + 2 H(+). Its function is as follows. Quinone reductase that provides resistance to thiol-specific stress caused by electrophilic quinones. Also exhibits azoreductase activity. Catalyzes the reductive cleavage of the azo bond in aromatic azo compounds to the corresponding amines. The protein is FMN-dependent NADH:quinone oxidoreductase 1 of Bacillus cereus (strain ATCC 14579 / DSM 31 / CCUG 7414 / JCM 2152 / NBRC 15305 / NCIMB 9373 / NCTC 2599 / NRRL B-3711).